The chain runs to 827 residues: MTKLNAQVKGSLNITTPGIQIWRIEAMQMVPVPSSTFGSFFDGDCYVVLAIHKTSSTLSYDIHYWIGQDSSQDEQGAAAIYTTQMDDYLKGRAVQHREVQGNESETFRSYFKQGLVIRKGGVASGMKHVETNSCDVQRLLHVKGKRNVLAGEVEMSWKSFNRGDVFLLDLGKLIIQWNGPESNRMERLRGMALAKEIRDQERGGRTYVGVVDGEKEGDSPQLMAIMNHVLGPRKELKAAISDSVVEPAAKAALKLYHVSDSEGKLVVREVATRPLTQDLLKHEDCYILDQGGLKIFVWKGKNANAQERSGAMSQALNFIKAKQYPPSTQVEVQNDGAESPIFQQLFQKWTVPNRTSGLGKTHTVGSVAKVEQVKFDALTMHVQPQVAAQQKMVDDGSGEVQVWRIEDLELVPVESKWLGHFYGGDCYLLLYTYLIGEKQHYLLYIWQGSQASQDEIAASAYQAVLLDQKYNDEPVQIRVTMGKEPPHLMSIFKGRMVVYQGGTSRKNNLEPVPSTRLFQVRGTNADNTKAFEVTARATSLNSNDVFILKTPSCCYLWCGKGCSGDEREMAKMVADTISRTEKQVVVEGQEPANFWMALGGKAPYANTKRLQEENQVITPRLFECSNQTGRFLATEIFDFNQDDLEEEDVFLLDVWDQVFFWIGKHANEEEKKAAATTVQEYLKTHPGNRDLETPIIVVKQGHEPPTFTGWFLAWDPFKWSNTKSYDDLKAELGNSGDWSQIADEVMSPKVDVFTANTSLSSGPLPTFPLEQLVNKSVEDLPEGVDPSRKEEHLSTEDFTRALGMTPAAFSALPRWKQQNIKKEKGLF.

The segment at 1-126 (MTKLNAQVKG…IRKGGVASGM (126 aa)) is necessary for homodimerization. Residues 1 to 734 (MTKLNAQVKG…YDDLKAELGN (734 aa)) form a core region. One copy of the Gelsolin-like 1 repeat lies at 27–76 (MQMVPVPSSTFGSFFDGDCYVVLAIHKTSSTLSYDIHYWIGQDSSQDEQG). LPA/PIP2-binding site stretches follow at residues 112–119 (KQGLVIRK) and 138–146 (RLLHVKGKR). Gelsolin-like repeat units follow at residues 148–188 (VLAG…MERL) and 265–309 (LVVR…QERS). Position 366 is a phosphoserine (Ser-366). 3 Gelsolin-like repeats span residues 407–457 (DLEL…DEIA), 528–568 (TKAF…DERE), and 631–672 (FLAT…EEKK). Residues Ser-735 and Ser-776 each carry the phosphoserine modification. The interval 735-827 (SGDWSQIADE…QNIKKEKGLF (93 aa)) is headpiece. Residues 761-827 (SGPLPTFPLE…QNIKKEKGLF (67 aa)) form the HP domain. The segment at 816 to 824 (KQQNIKKEK) is LPA/PIP2-binding site 3.

This sequence belongs to the villin/gelsolin family. As to quaternary structure, monomer. Homodimer; homodimerization is necessary for actin-bundling. Associates with F-actin; phosphorylation at tyrosine residues decreases the association with F-actin. Interacts (phosphorylated at C-terminus tyrosine phosphorylation sites) with PLCG1 (via the SH2 domains). Interacts (phosphorylated form) with PLCG1; the interaction is enhanced by hepatocyte growth factor (HGF). Post-translationally, phosphorylated on tyrosine residues by SRC. The unphosphorylated form increases the initial rate of actin-nucleating activity, whereas the tyrosine phosphorylated form inhibits actin-nucleating activity, enhances actin-bundling activity and enhances actin-severing activity by reducing high Ca(2+) requirements. The tyrosine phosphorylated form does not regulate actin-capping activity. Tyrosine phosphorylation is essential for cell migration: tyrosine phosphorylation sites in the N-terminus half regulate actin reorganization and cell morphology, whereas tyrosine phosphorylation sites in the C-terminus half regulate cell migration via interaction with PLCG1. Tyrosine phosphorylation is induced by epidermal growth factor (EGF) and stimulates cell migration. Expressed in small intestin, colon, kidney and enterocytes (at protein level).

It is found in the cytoplasm. The protein localises to the cytoskeleton. It localises to the cell projection. The protein resides in the microvillus. Its subcellular location is the lamellipodium. It is found in the ruffle. The protein localises to the filopodium tip. It localises to the filopodium. In terms of biological role, epithelial cell-specific Ca(2+)-regulated actin-modifying protein that modulates the reorganization of microvillar actin filaments. Plays a role in the actin nucleation, actin filament bundle assembly, actin filament capping and severing. Binds phosphatidylinositol 4,5-bisphosphate (PIP2) and lysophosphatidic acid (LPA); binds LPA with higher affinity than PIP2. Binding to LPA increases its phosphorylation by SRC and inhibits all actin-modifying activities. Binding to PIP2 inhibits actin-capping and -severing activities but enhances actin-bundling activity. Regulates the intestinal epithelial cell morphology, cell invasion, cell migration and apoptosis. Protects against apoptosis induced by dextran sodium sulfate (DSS) in the gastrointestinal epithelium. Appears to regulate cell death by maintaining mitochondrial integrity. Enhances hepatocyte growth factor (HGF)-induced epithelial cell motility, chemotaxis and wound repair. Upon S.flexneri cell infection, its actin-severing activity enhances actin-based motility of the bacteria and plays a role during the dissemination. The protein is Villin-1 (Vil1) of Mus musculus (Mouse).